Here is a 225-residue protein sequence, read N- to C-terminus: ATP-dependent Clp protease proteolytic subunit (225 aa).

Catalysis depends on S126, which acts as the Nucleophile. The active site involves H151.

Belongs to the peptidase S14 family. Fourteen ClpP subunits assemble into 2 heptameric rings which stack back to back to give a disk-like structure with a central cavity, resembling the structure of eukaryotic proteasomes.

It localises to the cytoplasm. The catalysed reaction is Hydrolysis of proteins to small peptides in the presence of ATP and magnesium. alpha-casein is the usual test substrate. In the absence of ATP, only oligopeptides shorter than five residues are hydrolyzed (such as succinyl-Leu-Tyr-|-NHMec, and Leu-Tyr-Leu-|-Tyr-Trp, in which cleavage of the -Tyr-|-Leu- and -Tyr-|-Trp bonds also occurs).. Functionally, cleaves peptides in various proteins in a process that requires ATP hydrolysis. Has a chymotrypsin-like activity. Plays a major role in the degradation of misfolded proteins. This Psychrobacter arcticus (strain DSM 17307 / VKM B-2377 / 273-4) protein is ATP-dependent Clp protease proteolytic subunit.